A 220-amino-acid chain; its full sequence is Iron-sulfur cluster repair protein YtfE (220 aa).

This sequence belongs to the RIC family. YtfE subfamily. Homodimer.

Its subcellular location is the cytoplasm. Di-iron-containing protein involved in the repair of iron-sulfur clusters damaged by oxidative and nitrosative stress conditions. The chain is Iron-sulfur cluster repair protein YtfE from Salmonella typhimurium (strain LT2 / SGSC1412 / ATCC 700720).